A 424-amino-acid polypeptide reads, in one-letter code: Glutamyl-tRNA reductase (424 aa).

Residues 53 to 56, Ser111, 116 to 118, and Gln122 each bind substrate; these read TCNR and EPQ. The Nucleophile role is filled by Cys54. 191 to 196 contacts NADP(+); the sequence is GAGEMI.

Belongs to the glutamyl-tRNA reductase family. As to quaternary structure, homodimer.

It catalyses the reaction (S)-4-amino-5-oxopentanoate + tRNA(Glu) + NADP(+) = L-glutamyl-tRNA(Glu) + NADPH + H(+). Its pathway is porphyrin-containing compound metabolism; protoporphyrin-IX biosynthesis; 5-aminolevulinate from L-glutamyl-tRNA(Glu): step 1/2. Catalyzes the NADPH-dependent reduction of glutamyl-tRNA(Glu) to glutamate 1-semialdehyde (GSA). The sequence is that of Glutamyl-tRNA reductase from Bordetella bronchiseptica (strain ATCC BAA-588 / NCTC 13252 / RB50) (Alcaligenes bronchisepticus).